A 347-amino-acid polypeptide reads, in one-letter code: DNA primase small subunit PriS (347 aa).

Catalysis depends on residues D95 and D97. Zn(2+) is bound by residues C106, H108, C114, and C117. The Zinc knuckle motif motif lies at 106-117 (CNHEPGTVCPIC). The active site involves D280.

Belongs to the eukaryotic-type primase small subunit family. Heterodimer of a small subunit (PriS) and a large subunit (PriL). Both participate in formation of the active center, but the ATP-binding site is exclusively located on the small subunit. Requires Mg(2+) as cofactor. It depends on Mn(2+) as a cofactor.

Functionally, catalytic subunit of DNA primase, an RNA polymerase that catalyzes the synthesis of short RNA molecules used as primers for DNA polymerase during DNA replication. The small subunit contains the primase catalytic core and has DNA synthesis activity on its own. Binding to the large subunit stabilizes and modulates the activity, increasing the rate of DNA synthesis while decreasing the length of the DNA fragments, and conferring RNA synthesis capability. The DNA polymerase activity may enable DNA primase to also catalyze primer extension after primer synthesis. May also play a role in DNA repair. This Pyrococcus furiosus (strain ATCC 43587 / DSM 3638 / JCM 8422 / Vc1) protein is DNA primase small subunit PriS.